The primary structure comprises 196 residues: 3-isopropylmalate dehydratase small subunit (196 aa).

It belongs to the LeuD family. LeuD type 1 subfamily. In terms of assembly, heterodimer of LeuC and LeuD.

The enzyme catalyses (2R,3S)-3-isopropylmalate = (2S)-2-isopropylmalate. Its pathway is amino-acid biosynthesis; L-leucine biosynthesis; L-leucine from 3-methyl-2-oxobutanoate: step 2/4. Its function is as follows. Catalyzes the isomerization between 2-isopropylmalate and 3-isopropylmalate, via the formation of 2-isopropylmaleate. The chain is 3-isopropylmalate dehydratase small subunit from Streptococcus sanguinis (strain SK36).